A 261-amino-acid polypeptide reads, in one-letter code: Putative ketoacyl reductase (261 aa).

Positions 15, 16, 18, 38, 39, 63, 64, 90, 157, 161, 190, and 192 each coordinate NADP(+). Residue Tyr157 is the Proton acceptor of the active site.

It belongs to the short-chain dehydrogenases/reductases (SDR) family. In terms of assembly, homotetramer.

It functions in the pathway antibiotic biosynthesis; actinorhodin biosynthesis. This Streptomyces coelicolor (strain ATCC BAA-471 / A3(2) / M145) protein is Putative ketoacyl reductase (actIII).